Here is a 1412-residue protein sequence, read N- to C-terminus: DNA-directed RNA polymerase subunit beta' (1412 aa).

Cys-70, Cys-72, Cys-85, and Cys-88 together coordinate Zn(2+). The Mg(2+) site is built by Asp-458, Asp-460, and Asp-462. Zn(2+) contacts are provided by Cys-813, Cys-887, Cys-894, and Cys-897. The interval 1388–1412 is disordered; the sequence is EQALLTPATTAEAVVGEEPAPPPAQ. Residues 1393-1405 show a composition bias toward low complexity; it reads TPATTAEAVVGEE.

The protein belongs to the RNA polymerase beta' chain family. The RNAP catalytic core consists of 2 alpha, 1 beta, 1 beta' and 1 omega subunit. When a sigma factor is associated with the core the holoenzyme is formed, which can initiate transcription. It depends on Mg(2+) as a cofactor. Requires Zn(2+) as cofactor.

The catalysed reaction is RNA(n) + a ribonucleoside 5'-triphosphate = RNA(n+1) + diphosphate. Its function is as follows. DNA-dependent RNA polymerase catalyzes the transcription of DNA into RNA using the four ribonucleoside triphosphates as substrates. The chain is DNA-directed RNA polymerase subunit beta' from Methylibium petroleiphilum (strain ATCC BAA-1232 / LMG 22953 / PM1).